A 478-amino-acid chain; its full sequence is MAGDKKFVEDITPMDEDFAQWYTDIVKKAELADYSSIRGCMIIRPNGYGIWENIQKYVDTKLKEYGHENVSMPIFIPENLLQKEKDHVEGFAPEVAWVTHGGDDELAERLCVRPTSETLFCEHYAKIVQSYKDLPKLYNQWCSVVRWEKTTRPFLRTTEFLWQEGHTIHETKEEAESHSLKILNMYSRLCEDMLAMPVVMGKKTDKEKFAGADDTYTIESLMHDGKALQAGTSHYLGQNFSKAFAIQFSDRNGKLDYPHYTTWAVTTRLIGAIIMVHGDNSGLKLPPRIAPTQAVIIPVAQHKEGVLEKAKELKEKLAKVVRVKLDDSDKMPGWKYSEYEMKGIPLRIEIGPKDIEKNQAVLVRRDNREKTIVSLDEIEIKVQEMLDIIHNSMLEEAKKTRDEKTYVATNMEEFEDTIENKPGFIKAMWCGDRACEDKIREVTGATSRCMPFEQEVVSDTCVCCGKKAKNLVYWGRAY.

The protein belongs to the class-II aminoacyl-tRNA synthetase family. ProS type 3 subfamily. In terms of assembly, homodimer.

The protein localises to the cytoplasm. It catalyses the reaction tRNA(Pro) + L-proline + ATP = L-prolyl-tRNA(Pro) + AMP + diphosphate. In terms of biological role, catalyzes the attachment of proline to tRNA(Pro) in a two-step reaction: proline is first activated by ATP to form Pro-AMP and then transferred to the acceptor end of tRNA(Pro). This Clostridium botulinum (strain ATCC 19397 / Type A) protein is Proline--tRNA ligase.